A 387-amino-acid chain; its full sequence is Succinate--CoA ligase [ADP-forming] subunit beta (387 aa).

Residues 9 to 236 (KELFAKHNVP…KDATDPLELK (228 aa)) form the ATP-grasp domain. ATP is bound by residues Lys45, 52–54 (GRG), Ser94, and Glu99. Mg(2+)-binding residues include Asn191 and Asp205. Substrate contacts are provided by residues Asn256 and 318–320 (GIT).

This sequence belongs to the succinate/malate CoA ligase beta subunit family. As to quaternary structure, heterotetramer of two alpha and two beta subunits. The cofactor is Mg(2+).

It carries out the reaction succinate + ATP + CoA = succinyl-CoA + ADP + phosphate. The enzyme catalyses GTP + succinate + CoA = succinyl-CoA + GDP + phosphate. Its pathway is carbohydrate metabolism; tricarboxylic acid cycle; succinate from succinyl-CoA (ligase route): step 1/1. In terms of biological role, succinyl-CoA synthetase functions in the citric acid cycle (TCA), coupling the hydrolysis of succinyl-CoA to the synthesis of either ATP or GTP and thus represents the only step of substrate-level phosphorylation in the TCA. The beta subunit provides nucleotide specificity of the enzyme and binds the substrate succinate, while the binding sites for coenzyme A and phosphate are found in the alpha subunit. This chain is Succinate--CoA ligase [ADP-forming] subunit beta, found in Mycolicibacterium gilvum (strain PYR-GCK) (Mycobacterium gilvum (strain PYR-GCK)).